Reading from the N-terminus, the 195-residue chain is Large ribosomal subunit protein bL25 (195 aa).

This sequence belongs to the bacterial ribosomal protein bL25 family. CTC subfamily. Part of the 50S ribosomal subunit; part of the 5S rRNA/L5/L18/L25 subcomplex. Contacts the 5S rRNA. Binds to the 5S rRNA independently of L5 and L18.

Its function is as follows. This is one of the proteins that binds to the 5S RNA in the ribosome where it forms part of the central protuberance. This is Large ribosomal subunit protein bL25 from Chlorobium chlorochromatii (strain CaD3).